The sequence spans 389 residues: Putative F-box/kelch-repeat protein At4g35120 (389 aa).

One can recognise an F-box domain in the interval 24–70 (SMSISSLPDEIVLSFLALISKSYYRSLSLVSKSFYSLLSSTEIYAAR). 3 Kelch repeats span residues 128–174 (EIYK…FLDG), 176–225 (IYVI…AVSG), and 227–273 (RLYV…MKPI).

The sequence is that of Putative F-box/kelch-repeat protein At4g35120 from Arabidopsis thaliana (Mouse-ear cress).